The primary structure comprises 214 residues: GTP-binding nuclear protein Ran (214 aa).

Positions 6 to 170 constitute a Small GTPase Ran-type domain; it reads YIPQYKLILV…LWLARRLSNQ (165 aa). 17-24 is a binding site for GTP; that stretch reads DGGVGKTT. The tract at residues 36 to 44 is switch-I; sequence KKYIPTLGV. GTP is bound by residues Gly67, 121–124, and 149–151; these read NKVD and SAR. Positions 67-83 are switch-II; the sequence is GQEKFGGLRDGYYIKSD.

This sequence belongs to the small GTPase superfamily. Ran family. As to quaternary structure, found in a nuclear export complex with RanGTP, exportin and pre-miRNA.

It is found in the nucleus. GTP-binding protein involved in nucleocytoplasmic transport. Required for the import of protein into the nucleus and also for RNA export. Involved in chromatin condensation and control of cell cycle. In Plasmodium falciparum, this protein is GTP-binding nuclear protein Ran.